Reading from the N-terminus, the 261-residue chain is tRNA pseudouridine synthase A (261 aa).

Asp-51 functions as the Nucleophile in the catalytic mechanism. Tyr-109 contributes to the substrate binding site.

It belongs to the tRNA pseudouridine synthase TruA family. As to quaternary structure, homodimer.

It carries out the reaction uridine(38/39/40) in tRNA = pseudouridine(38/39/40) in tRNA. Formation of pseudouridine at positions 38, 39 and 40 in the anticodon stem and loop of transfer RNAs. The polypeptide is tRNA pseudouridine synthase A (Photobacterium profundum (strain SS9)).